We begin with the raw amino-acid sequence, 238 residues long: Probable transcriptional regulatory protein YeeN (238 aa).

The protein belongs to the TACO1 family. YeeN subfamily.

The protein resides in the cytoplasm. This chain is Probable transcriptional regulatory protein YeeN, found in Salmonella choleraesuis (strain SC-B67).